The primary structure comprises 485 residues: UDP-N-acetylmuramate--L-alanine ligase (485 aa).

120-126 (GSHGKTT) provides a ligand contact to ATP.

The protein belongs to the MurCDEF family.

Its subcellular location is the cytoplasm. It carries out the reaction UDP-N-acetyl-alpha-D-muramate + L-alanine + ATP = UDP-N-acetyl-alpha-D-muramoyl-L-alanine + ADP + phosphate + H(+). It participates in cell wall biogenesis; peptidoglycan biosynthesis. Cell wall formation. This is UDP-N-acetylmuramate--L-alanine ligase from Rickettsia conorii (strain ATCC VR-613 / Malish 7).